Reading from the N-terminus, the 133-residue chain is Cytidine deaminase (133 aa).

The CMP/dCMP-type deaminase domain maps to 4–126 (VDWNMLRGNA…DLLPDAFGLD (123 aa)). 45–47 (NVE) provides a ligand contact to substrate. Position 56 (cysteine 56) interacts with Zn(2+). Glutamate 58 (proton donor) is an active-site residue. Positions 89 and 92 each coordinate Zn(2+).

It belongs to the cytidine and deoxycytidylate deaminase family. Homotetramer. It depends on Zn(2+) as a cofactor.

The enzyme catalyses cytidine + H2O + H(+) = uridine + NH4(+). It catalyses the reaction 2'-deoxycytidine + H2O + H(+) = 2'-deoxyuridine + NH4(+). Its function is as follows. Recycles cytidine and 2-deoxycytidine for uridine and 2-deoxyuridine synthesis, respectively. Catalyzes the hydrolytic deamination of cytidine and 2-deoxycytidine to form, respectively, uridine and 2-deoxyuridine. The chain is Cytidine deaminase (cdd) from Mycobacterium tuberculosis (strain CDC 1551 / Oshkosh).